Reading from the N-terminus, the 284-residue chain is D-tagatose-1,6-bisphosphate aldolase subunit GatY (284 aa).

The active-site Proton donor is the Asp-82. Zn(2+) is bound by residues His-83 and His-180. Residue Gly-181 participates in dihydroxyacetone phosphate binding. His-208 contacts Zn(2+). Residues 209 to 211 (GAS) and 230 to 233 (NVAT) contribute to the dihydroxyacetone phosphate site.

It belongs to the class II fructose-bisphosphate aldolase family. TagBP aldolase GatY subfamily. In terms of assembly, forms a complex with GatZ. Zn(2+) is required as a cofactor.

The enzyme catalyses D-tagatofuranose 1,6-bisphosphate = D-glyceraldehyde 3-phosphate + dihydroxyacetone phosphate. It participates in carbohydrate metabolism; D-tagatose 6-phosphate degradation; D-glyceraldehyde 3-phosphate and glycerone phosphate from D-tagatose 6-phosphate: step 2/2. In terms of biological role, catalytic subunit of the tagatose-1,6-bisphosphate aldolase GatYZ, which catalyzes the reversible aldol condensation of dihydroxyacetone phosphate (DHAP or glycerone-phosphate) with glyceraldehyde 3-phosphate (G3P) to produce tagatose 1,6-bisphosphate (TBP). Requires GatZ subunit for full activity and stability. Is involved in the catabolism of galactitol. The protein is D-tagatose-1,6-bisphosphate aldolase subunit GatY of Klebsiella pneumoniae subsp. pneumoniae (strain ATCC 700721 / MGH 78578).